We begin with the raw amino-acid sequence, 820 residues long: MKTNMQVKGRGGNMKANTNTQQVIFELKKKVVIALNKLADRDTYQRGVDELEKTVEHLAPDKVSCFLSCILDTDSEQKSAVRKECIRLMGTLARFHEGLVGPYLGKMVSSIVKRLKDPDSVVRDACIETMGVLASKMSCYEDQNFGVFVSLVKPLFEAIGDQNKYVQSGAALCLARVIDSSPEAPVAIIQRMLMRTVKLLNNSHFIAKPAVIELNRSIILAGGATSKSVLSSAMSSFQDALKNKDWTTRKAASVALMEIAATGEKFLGPLKASCICSLESCRFDKVKPVRDSVILALKYWKGVPGSDSPEPSETESSVKESYNGARESSELFSTSDFKVKDGMSIKYVTDVTRKKVPVSARQPPTRYNDDPRKSNQDDWHIEIAVPESSFVSKVDLYNEESEGSCITKTFAETTNTPEVTYEYIPMKDKADSYVTGGVNENDDIKSITVSSSSFRASGMVNPAITSKNYAAEETDLEEQPFSTQVKDRTSLDSFVTVSSSQINHDCCAKIANEMASVRKQLSDIENKQSRLIDQLQVFSTGIMNNFSVLQSKVSSLEYAVEGIAQNAALHSDISNSNFVKHNQGSTISPRLSSCTSRTSTDIRNRQSTLSTSKYSRENKTHVRSRLNESQGMEKTRSNPLGKTGQLHTREDIWNNIGQGRQTLIQTRTSSDSIQSIRQQYAEVMSGTRKPVTGVSCEDVVESEYLQVLSSGDELALVELLDRTGPVLESMSSQTINEILSILLSYLLERRFMNSILPWLHQVADLSTTNGANYLIPSARKRAQVLSAIQEASGMDFSNLAERRAVTQIAMKLRKLWGKCS.

HEAT repeat units follow at residues 61–98 (DKVS…FHEG), 102–139 (PYLG…KMSC), 146–183 (GVFV…SSPE), 187–224 (AIIQ…AGGA), and 228–265 (SVLS…TGEK). Residues 304-321 (PGSDSPEPSETESSVKES) are compositionally biased toward low complexity. Disordered regions lie at residues 304-325 (PGSD…YNGA), 357-377 (PVSA…SNQD), and 584-644 (GSTI…GKTG). A compositionally biased stretch (basic and acidic residues) spans 367–377 (YNDDPRKSNQD). A compositionally biased stretch (polar residues) spans 584–613 (GSTISPRLSSCTSRTSTDIRNRQSTLSTSK).

The sequence is that of TORTIFOLIA1-like protein 2 from Arabidopsis thaliana (Mouse-ear cress).